Reading from the N-terminus, the 240-residue chain is MORN repeat-containing protein 3 (240 aa).

Positions 6 to 35 are interaction with MDM2; sequence CPKKSESLWKGWDRKAQKNGLRRQVYAVNG. 7 MORN repeats span residues 38–60, 62–84, 91–113, 114–136, 137–159, 160–182, and 184–205; these read YVGEWKDNVKHGKGTQVWKKNGA, YEGDWKFGKRDGYGTLSLPDQQT, YSGWWKGDKKSGYGIQFFGPKEY, YEGEWCGSQRSGWGRMYYSNGDI, YEGQWENDKPNGDGMLRLKNGNR, YEGCWERGMKNGLGRFFHLDHGQ, and FEGFWVDNMAKCGTMIDFGRDE. The tract at residues 76–100 is interaction with SIRT1; the sequence is TLSLPDQQTGKCRRVYSGWWKGDKK. Residues 206 to 240 form an interaction with TP53 region; it reads APEPTQFPIPEVKILDPDGVLAQALAMFKKTEEGD.

As to quaternary structure, interacts with MEIG1. Interacts with TP53, MDM2 and SIRT1; the interactions mediate post-transcriptional modifications of TP53 by MDM2 and SIRT1.

The protein localises to the cytoplasmic vesicle. It localises to the secretory vesicle. The protein resides in the acrosome. Its function is as follows. Assembles a suppression complex (suppresome) by tethering SIRT1 and MDM2 to regulate composite modifications of p53/TP53. Confers both deacetylation-mediated functional inactivation, by SIRT1, and ubiquitination-dependent degradation, by MDM2, of p53/TP53, promoting a proliferative and cell survival behaviors. May play a role in the regulation of spermatogenesis. The protein is MORN repeat-containing protein 3 (MORN3) of Macaca fascicularis (Crab-eating macaque).